Here is a 316-residue protein sequence, read N- to C-terminus: Ribosomal RNA small subunit methyltransferase H (316 aa).

S-adenosyl-L-methionine-binding positions include 35–37 (AGH), aspartate 55, phenylalanine 84, aspartate 105, and glutamine 112.

It belongs to the methyltransferase superfamily. RsmH family.

The protein resides in the cytoplasm. The catalysed reaction is cytidine(1402) in 16S rRNA + S-adenosyl-L-methionine = N(4)-methylcytidine(1402) in 16S rRNA + S-adenosyl-L-homocysteine + H(+). Its function is as follows. Specifically methylates the N4 position of cytidine in position 1402 (C1402) of 16S rRNA. This is Ribosomal RNA small subunit methyltransferase H from Streptococcus pneumoniae (strain JJA).